The following is a 312-amino-acid chain: Methionyl-tRNA formyltransferase (312 aa).

117-120 (SLLP) is a binding site for (6S)-5,6,7,8-tetrahydrofolate.

This sequence belongs to the Fmt family.

It catalyses the reaction L-methionyl-tRNA(fMet) + (6R)-10-formyltetrahydrofolate = N-formyl-L-methionyl-tRNA(fMet) + (6S)-5,6,7,8-tetrahydrofolate + H(+). Functionally, attaches a formyl group to the free amino group of methionyl-tRNA(fMet). The formyl group appears to play a dual role in the initiator identity of N-formylmethionyl-tRNA by promoting its recognition by IF2 and preventing the misappropriation of this tRNA by the elongation apparatus. The chain is Methionyl-tRNA formyltransferase from Bordetella pertussis (strain Tohama I / ATCC BAA-589 / NCTC 13251).